We begin with the raw amino-acid sequence, 232 residues long: Ribonuclease P protein component 3 (232 aa).

This sequence belongs to the eukaryotic/archaeal RNase P protein component 3 family. As to quaternary structure, consists of a catalytic RNA component and at least 4-5 protein subunits.

The protein localises to the cytoplasm. It carries out the reaction Endonucleolytic cleavage of RNA, removing 5'-extranucleotides from tRNA precursor.. Functionally, part of ribonuclease P, a protein complex that generates mature tRNA molecules by cleaving their 5'-ends. This is Ribonuclease P protein component 3 from Methanococcus maripaludis (strain C7 / ATCC BAA-1331).